We begin with the raw amino-acid sequence, 493 residues long: Transcript termination protein A18 (493 aa).

The Helicase ATP-binding domain occupies 100-256; sequence MIESKRPLYI…NSIINIAKLS (157 aa). ATP is bound at residue 113–120; it reads LACGFGKT. The DESH box signature appears at 206 to 209; it reads DESH.

The protein belongs to the helicase family. Poxviruses subfamily. In terms of assembly, interacts with G2. Might be part of a transcription complex composed at least of G2, A18, and H5.

The protein resides in the virion. In terms of biological role, DNA helicase which seems to act as a postreplicative transcription termination factor. Involved in ATP-dependent release of nascent RNA. Forms a stable complex with single-stranded DNA, and to a lesser extent RNA. In Vaccinia virus (strain Tian Tan) (VACV), this protein is Transcript termination protein A18.